The primary structure comprises 154 residues: Acidic phospholipase A2 2 (154 aa).

An N-terminal signal peptide occupies residues 1-19 (MHPAHLLVPLGVCVSLLGA). Residues 20–27 (ARIPPLPL) constitute a propeptide that is removed on maturation. 7 disulfide bridges follow: cysteine 38/cysteine 104, cysteine 54/cysteine 153, cysteine 56/cysteine 72, cysteine 71/cysteine 132, cysteine 78/cysteine 125, cysteine 88/cysteine 118, and cysteine 111/cysteine 123. The Ca(2+) site is built by tyrosine 55, glycine 57, and glycine 59. Residue histidine 75 is part of the active site. Aspartate 76 is a Ca(2+) binding site. Residue aspartate 126 is part of the active site.

This sequence belongs to the phospholipase A2 family. Group I subfamily. D49 sub-subfamily. As to quaternary structure, monomer. It depends on Ca(2+) as a cofactor. Expressed by the venom gland.

It localises to the secreted. It catalyses the reaction a 1,2-diacyl-sn-glycero-3-phosphocholine + H2O = a 1-acyl-sn-glycero-3-phosphocholine + a fatty acid + H(+). Snake venom phospholipase A2 (PLA2) that shows moderate enzymatic activity and exhibits procoagulant activity. PLA2 catalyzes the calcium-dependent hydrolysis of the 2-acyl groups in 3-sn-phosphoglycerides. The polypeptide is Acidic phospholipase A2 2 (Pseudonaja textilis (Eastern brown snake)).